Reading from the N-terminus, the 793-residue chain is Transcription factor opdR (793 aa).

Disordered stretches follow at residues 1–29 (MAQD…DPCR), 60–113 (TASS…QSQN), and 457–476 (LDDE…QPSE). Residues 25–53 (CDPCRRRKVRCDRKFPCGQCERARTALQC) constitute a DNA-binding region (zn(2)-C6 fungal-type).

Its subcellular location is the nucleus. Transcription factor; part of the gene cluster that mediates the biosynthesis of oxopyrrolidines, polyketide-amino acid hybrid compounds with feature structures of tetramic acid. The polypeptide is Transcription factor opdR (Penicillium oxalicum (strain 114-2 / CGMCC 5302) (Penicillium decumbens)).